A 95-amino-acid polypeptide reads, in one-letter code: DNA-directed RNA polymerase subunit Rpo11 (95 aa).

It belongs to the archaeal Rpo11/eukaryotic RPB11/RPC19 RNA polymerase subunit family. In terms of assembly, part of the RNA polymerase complex.

The protein resides in the cytoplasm. The enzyme catalyses RNA(n) + a ribonucleoside 5'-triphosphate = RNA(n+1) + diphosphate. DNA-dependent RNA polymerase (RNAP) catalyzes the transcription of DNA into RNA using the four ribonucleoside triphosphates as substrates. The sequence is that of DNA-directed RNA polymerase subunit Rpo11 from Pyrococcus horikoshii (strain ATCC 700860 / DSM 12428 / JCM 9974 / NBRC 100139 / OT-3).